The chain runs to 553 residues: Glycerol kinase 2 (553 aa).

Threonine 20 contributes to the substrate binding site. Position 24 (arginine 24) interacts with ATP. The substrate site is built by arginine 94, tyrosine 148, and aspartate 259. Residues threonine 281, glycine 326, and glycine 427–asparagine 431 contribute to the ATP site. A helical transmembrane segment spans residues isoleucine 526–alanine 546.

This sequence belongs to the FGGY kinase family. As to quaternary structure, interacts with ARMC12 and PLD6.

The protein resides in the mitochondrion outer membrane. The protein localises to the cytoplasm. The catalysed reaction is glycerol + ATP = sn-glycerol 3-phosphate + ADP + H(+). Its pathway is polyol metabolism; glycerol degradation via glycerol kinase pathway; sn-glycerol 3-phosphate from glycerol: step 1/1. Functionally, key enzyme in the regulation of glycerol uptake and metabolism. Essential for male fertility and sperm mitochondrial sheath formation. Required for proper arrangement of crescent-like mitochondria to form the mitochondrial sheath during spermatogenesis. Can induce mitochondrial clustering through interactions with PLD6 and up-regulation of phosphatidic acid synthesis in the mitochondria. The sequence is that of Glycerol kinase 2 (GK2) from Macaca fascicularis (Crab-eating macaque).